A 144-amino-acid polypeptide reads, in one-letter code: Large ribosomal subunit protein uL13 (144 aa).

It belongs to the universal ribosomal protein uL13 family. In terms of assembly, part of the 50S ribosomal subunit.

In terms of biological role, this protein is one of the early assembly proteins of the 50S ribosomal subunit, although it is not seen to bind rRNA by itself. It is important during the early stages of 50S assembly. In Clostridium botulinum (strain Alaska E43 / Type E3), this protein is Large ribosomal subunit protein uL13.